The following is a 403-amino-acid chain: Ribosomal RNA large subunit methyltransferase I (403 aa).

The PUA domain occupies 9 to 88 (YPRLVLSKGR…ESIDIAFFTR (80 aa)).

This sequence belongs to the methyltransferase superfamily. RlmI family.

It is found in the cytoplasm. It carries out the reaction cytidine(1962) in 23S rRNA + S-adenosyl-L-methionine = 5-methylcytidine(1962) in 23S rRNA + S-adenosyl-L-homocysteine + H(+). Specifically methylates the cytosine at position 1962 (m5C1962) of 23S rRNA. In Salmonella typhi, this protein is Ribosomal RNA large subunit methyltransferase I.